The chain runs to 80 residues: Nuclear protein 1 (80 aa).

Disordered stretches follow at residues 1 to 21 (MATLPPTANPSQQPLNLEDED) and 38 to 80 (VGGG…KAWR). Basic and acidic residues predominate over residues 61 to 80 (GHERKLLTKFQNSERKKAWR). Residues 64 to 80 (RKLLTKFQNSERKKAWR) carry the Nuclear localization signal motif.

It belongs to the NUPR family. As to quaternary structure, monomer. Directly interacts with MSL1 and binds MORF4L1, two components of histone acetyltransferase complex; the interaction with MORF4L1 may be mediated by MSL1. Interacts with EP300; this interaction enhances the effect of EP300 on PAX2 transcription factor activity. Interacts with PAXIP1; this interaction prevents PAXIP1 inhibition of PAX2 transcription factor activity. Interacts with COPS5; this interaction allows COPS5-dependent CDKN1B nuclear to cytoplasm translocation. Interacts with RNF2. Interacts with FOXO3; this interaction represses FOXO3 transactivation. Interacts with PTMA; regulates apoptotic process. Interacts with MYOD1, EP300 and DDX5; this interaction coordinates the association of anti-proliferative and pro-myogenic proteins at the myogenin promoter. Interacts with TP53; interaction is stress-dependent. Forms a complex with EP300 and TP53; this complex binds CDKN1A promoter leading to transcriptional induction of CDKN1A. Post-translationally, phosphorylated. Phosphorylation promotes DNA-binding activity. In terms of processing, acetylated. As to expression, highly expressed in pancreas and both ovaries and testes.

It localises to the nucleus. The protein resides in the cytoplasm. Its subcellular location is the perinuclear region. Functionally, transcription regulator that converts stress signals into a program of gene expression that empowers cells with resistance to the stress induced by a change in their microenvironment. Thereby participates in the regulation of many processes namely cell-cycle, apoptosis, autophagy and DNA repair responses. Controls cell cycle progression and protects cells from genotoxic stress induced by doxorubicin through the complex formation with TP53 and EP300 that binds CDKN1A promoter leading to transcriptional induction of CDKN1A. Protects pancreatic cancer cells from stress-induced cell death by binding the RELB promoter and activating its transcription, leading to IER3 transactivation. Negatively regulates apoptosis through interaction with PTMA. Inhibits autophagy-induced apoptosis in cardiac cells through FOXO3 interaction, inducing cytoplasmic translocation of FOXO3 thereby preventing the FOXO3 association with the pro-autophagic BNIP3 promoter. Inhibits cell growth and facilitates programmed cell death by apoptosis after adriamycin-induced DNA damage through transactivation of TP53. Regulates methamphetamine-induced apoptosis and autophagy through DDIT3-mediated endoplasmic reticulum stress pathway. Participates in DNA repair following gamma-irradiation by facilitating DNA access of the transcription machinery through interaction with MSL1 leading to inhibition of histone H4' Lys-16' acetylation (H4K16ac). Coactivator of PAX2 transcription factor activity, both by recruiting the EP300 cofactor to increase PAX2 transcription factor activity and by binding PAXIP1 to suppress PAXIP1-induced inhibition on PAX2. Positively regulates cell cycle progression through interaction with COPS5 inducing cytoplasmic translocation of CDKN1B leading to the CDKN1B degradation. Coordinates, through its interaction with EP300, the assiociation of MYOD1, EP300 and DDX5 to the MYOG promoter, leading to inhibition of cell-cycle progression and myogenic differentiation promotion. Negatively regulates beta cell proliferation via inhibition of cell-cycle regulatory genes expression through the suppression of their promoter activities. Also required for LHB expression and ovarian maturation. Exacerbates CNS inflammation and demyelination upon cuprizone treatment. This chain is Nuclear protein 1, found in Mus musculus (Mouse).